A 122-amino-acid polypeptide reads, in one-letter code: E3 ubiquitin-protein ligase PPP1R11 (122 aa).

Polar residues predominate over residues 1 to 12 (MAEVPGTSSETI). A disordered region spans residues 1–33 (MAEVPGTSSETITETVQTGTPPPPQQEGRSLTI). Threonine 20 is modified (phosphothreonine). The tract at residues 55-65 (HLGRRSSKCCC) is atypical RING finger domain 1. The interval 72–122 (QFGESSSESEGDDEEGCGSAHCILGHGRRGHGQREGGGTTVPPSSGGTNPH) is disordered. A compositionally biased stretch (acidic residues) spans 78 to 87 (SESEGDDEEG). Residues 88–97 (CGSAHCILGH) are atypical RING finger domain 2. Residues 111 to 122 (TVPPSSGGTNPH) are compositionally biased toward low complexity.

It carries out the reaction S-ubiquitinyl-[E2 ubiquitin-conjugating enzyme]-L-cysteine + [acceptor protein]-L-lysine = [E2 ubiquitin-conjugating enzyme]-L-cysteine + N(6)-ubiquitinyl-[acceptor protein]-L-lysine.. It participates in protein modification; protein ubiquitination. Functionally, atypical E3 ubiquitin-protein ligase which ubiquitinates TLR2 at 'Lys-754' leading to its degradation by the proteasome. Inhibitor of protein phosphatase 1. The protein is E3 ubiquitin-protein ligase PPP1R11 (ppp1r11) of Danio rerio (Zebrafish).